The primary structure comprises 354 residues: Phosphate acyltransferase (354 aa).

The protein belongs to the PlsX family. In terms of assembly, homodimer. Probably interacts with PlsY.

It localises to the cytoplasm. The enzyme catalyses a fatty acyl-[ACP] + phosphate = an acyl phosphate + holo-[ACP]. It functions in the pathway lipid metabolism; phospholipid metabolism. Functionally, catalyzes the reversible formation of acyl-phosphate (acyl-PO(4)) from acyl-[acyl-carrier-protein] (acyl-ACP). This enzyme utilizes acyl-ACP as fatty acyl donor, but not acyl-CoA. This Bordetella petrii (strain ATCC BAA-461 / DSM 12804 / CCUG 43448) protein is Phosphate acyltransferase.